A 413-amino-acid chain; its full sequence is Putative competence-damage inducible protein (413 aa).

This sequence belongs to the CinA family.

The sequence is that of Putative competence-damage inducible protein from Alkaliphilus oremlandii (strain OhILAs) (Clostridium oremlandii (strain OhILAs)).